Reading from the N-terminus, the 185-residue chain is MINQIDIKTRERMEACIQTFHNNINNIKTGRASPTLLHNIYIEYFGSKTPLRQVSNIIVEDSHTLKINVFDDSITSLIRKSILNSNLDLNPVLQGKDIIIPIPRLTEERRKQLIKVIRGDAESSRIQIRNIRRDANDKVKRLLKDKIISEDNEHTSQSKIQIMTNEYIKKIDCILEKKEKELMKF.

Belongs to the RRF family.

Its subcellular location is the cytoplasm. In terms of biological role, responsible for the release of ribosomes from messenger RNA at the termination of protein biosynthesis. May increase the efficiency of translation by recycling ribosomes from one round of translation to another. The protein is Ribosome-recycling factor of Buchnera aphidicola subsp. Acyrthosiphon pisum (strain Tuc7).